An 89-amino-acid chain; its full sequence is uncharacterized protein (89 aa).

A helical transmembrane segment spans residues 20-39 (SFAMTTYLNLFVKLLIFLYI).

The protein localises to the membrane. This is an uncharacterized protein from Escherichia coli (strain K12).